The following is a 341-amino-acid chain: Glyceraldehyde-3-phosphate dehydrogenase 2 (341 aa).

NAD(+) is bound by residues 12 to 13, Arg-78, and Thr-120; that span reads RI. D-glyceraldehyde 3-phosphate contacts are provided by residues 152 to 154 and Thr-183; that span reads SCT. Cys-153 (nucleophile) is an active-site residue. Asn-184 serves as a coordination point for NAD(+). D-glyceraldehyde 3-phosphate-binding positions include Arg-198, 211–212, and Arg-234; that span reads TG. Asn-313 lines the NAD(+) pocket.

This sequence belongs to the glyceraldehyde-3-phosphate dehydrogenase family. In terms of assembly, homotetramer.

Its subcellular location is the cytoplasm. The catalysed reaction is D-glyceraldehyde 3-phosphate + phosphate + NAD(+) = (2R)-3-phospho-glyceroyl phosphate + NADH + H(+). It functions in the pathway carbohydrate degradation; glycolysis; pyruvate from D-glyceraldehyde 3-phosphate: step 1/5. Catalyzes the oxidative phosphorylation of glyceraldehyde 3-phosphate (G3P) to 1,3-bisphosphoglycerate (BPG) using the cofactor NAD. The first reaction step involves the formation of a hemiacetal intermediate between G3P and a cysteine residue, and this hemiacetal intermediate is then oxidized to a thioester, with concomitant reduction of NAD to NADH. The reduced NADH is then exchanged with the second NAD, and the thioester is attacked by a nucleophilic inorganic phosphate to produce BPG. The chain is Glyceraldehyde-3-phosphate dehydrogenase 2 (gapA2) from Staphylococcus aureus (strain MRSA252).